Consider the following 144-residue polypeptide: Prefoldin subunit alpha (144 aa).

The protein belongs to the prefoldin alpha subunit family. As to quaternary structure, heterohexamer of two alpha and four beta subunits.

Its subcellular location is the cytoplasm. Its function is as follows. Molecular chaperone capable of stabilizing a range of proteins. Seems to fulfill an ATP-independent, HSP70-like function in archaeal de novo protein folding. This chain is Prefoldin subunit alpha, found in Methanococcus maripaludis (strain C5 / ATCC BAA-1333).